Here is a 155-residue protein sequence, read N- to C-terminus: 6,7-dimethyl-8-ribityllumazine synthase (155 aa).

5-amino-6-(D-ribitylamino)uracil is bound by residues Phe-24, 58–60 (AFE), and 82–84 (VII). 87 to 88 (ST) contributes to the (2S)-2-hydroxy-3-oxobutyl phosphate binding site. Catalysis depends on His-90, which acts as the Proton donor. 5-amino-6-(D-ribitylamino)uracil is bound at residue Phe-115. Position 129 (Arg-129) interacts with (2S)-2-hydroxy-3-oxobutyl phosphate.

It belongs to the DMRL synthase family.

It carries out the reaction (2S)-2-hydroxy-3-oxobutyl phosphate + 5-amino-6-(D-ribitylamino)uracil = 6,7-dimethyl-8-(1-D-ribityl)lumazine + phosphate + 2 H2O + H(+). It functions in the pathway cofactor biosynthesis; riboflavin biosynthesis; riboflavin from 2-hydroxy-3-oxobutyl phosphate and 5-amino-6-(D-ribitylamino)uracil: step 1/2. Its function is as follows. Catalyzes the formation of 6,7-dimethyl-8-ribityllumazine by condensation of 5-amino-6-(D-ribitylamino)uracil with 3,4-dihydroxy-2-butanone 4-phosphate. This is the penultimate step in the biosynthesis of riboflavin. This chain is 6,7-dimethyl-8-ribityllumazine synthase, found in Chlorobium phaeobacteroides (strain DSM 266 / SMG 266 / 2430).